We begin with the raw amino-acid sequence, 171 residues long: MNLKDHIRGIPDFPKPGILFYDISTLIRHADAWQVAMGRLAKVVRAHHPDLLAGVESRGFILAAPLALKLGCGFIMLRKRGKLPGATVGYDYDLEYGQDRIEIQADAVQPGQRVVVVDDLLATGGTMAAGIKLLRKVGAEVPAAAALIELAFLKGRDRLDVPFEALVSYDQ.

It belongs to the purine/pyrimidine phosphoribosyltransferase family. Homodimer.

Its subcellular location is the cytoplasm. The enzyme catalyses AMP + diphosphate = 5-phospho-alpha-D-ribose 1-diphosphate + adenine. It functions in the pathway purine metabolism; AMP biosynthesis via salvage pathway; AMP from adenine: step 1/1. Its function is as follows. Catalyzes a salvage reaction resulting in the formation of AMP, that is energically less costly than de novo synthesis. This Acidiphilium cryptum (strain JF-5) protein is Adenine phosphoribosyltransferase.